A 102-amino-acid chain; its full sequence is Large ribosomal subunit protein bL21 (102 aa).

Belongs to the bacterial ribosomal protein bL21 family. Part of the 50S ribosomal subunit. Contacts protein L20.

Its function is as follows. This protein binds to 23S rRNA in the presence of protein L20. The protein is Large ribosomal subunit protein bL21 of Nitratidesulfovibrio vulgaris (strain DSM 19637 / Miyazaki F) (Desulfovibrio vulgaris).